The chain runs to 189 residues: ATP synthase subunit b (189 aa).

The helical transmembrane segment at proline 38–leucine 58 threads the bilayer.

It belongs to the ATPase B chain family. F-type ATPases have 2 components, F(1) - the catalytic core - and F(0) - the membrane proton channel. F(1) has five subunits: alpha(3), beta(3), gamma(1), delta(1), epsilon(1). F(0) has three main subunits: a(1), b(2) and c(10-14). The alpha and beta chains form an alternating ring which encloses part of the gamma chain. F(1) is attached to F(0) by a central stalk formed by the gamma and epsilon chains, while a peripheral stalk is formed by the delta and b chains.

Its subcellular location is the cell membrane. Functionally, f(1)F(0) ATP synthase produces ATP from ADP in the presence of a proton or sodium gradient. F-type ATPases consist of two structural domains, F(1) containing the extramembraneous catalytic core and F(0) containing the membrane proton channel, linked together by a central stalk and a peripheral stalk. During catalysis, ATP synthesis in the catalytic domain of F(1) is coupled via a rotary mechanism of the central stalk subunits to proton translocation. Component of the F(0) channel, it forms part of the peripheral stalk, linking F(1) to F(0). The polypeptide is ATP synthase subunit b (Mycoplasmopsis agalactiae (strain NCTC 10123 / CIP 59.7 / PG2) (Mycoplasma agalactiae)).